The following is a 399-amino-acid chain: Chorismate synthase (399 aa).

The NADP(+) site is built by Arg-40 and Arg-46. Residues 135-137 (RAS), 256-257 (QA), Gly-301, 316-320 (KPIAT), and Arg-342 contribute to the FMN site.

This sequence belongs to the chorismate synthase family. Homotetramer. The cofactor is FMNH2.

The enzyme catalyses 5-O-(1-carboxyvinyl)-3-phosphoshikimate = chorismate + phosphate. The protein operates within metabolic intermediate biosynthesis; chorismate biosynthesis; chorismate from D-erythrose 4-phosphate and phosphoenolpyruvate: step 7/7. Its function is as follows. Catalyzes the anti-1,4-elimination of the C-3 phosphate and the C-6 proR hydrogen from 5-enolpyruvylshikimate-3-phosphate (EPSP) to yield chorismate, which is the branch point compound that serves as the starting substrate for the three terminal pathways of aromatic amino acid biosynthesis. This reaction introduces a second double bond into the aromatic ring system. The protein is Chorismate synthase of Arthrobacter sp. (strain FB24).